Here is a 512-residue protein sequence, read N- to C-terminus: Cytochrome P450 26B1 (512 aa).

Residue cysteine 441 participates in heme binding.

This sequence belongs to the cytochrome P450 family. It depends on heme as a cofactor.

It localises to the endoplasmic reticulum membrane. It is found in the microsome membrane. It catalyses the reaction all-trans-retinoate + reduced [NADPH--hemoprotein reductase] + O2 = all-trans-4-hydroxyretinoate + oxidized [NADPH--hemoprotein reductase] + H2O + H(+). It carries out the reaction all-trans-retinoate + reduced [NADPH--hemoprotein reductase] + O2 = all-trans-18-hydroxyretinoate + oxidized [NADPH--hemoprotein reductase] + H2O + H(+). Its function is as follows. A cytochrome P450 monooxygenase involved in the metabolism of retinoates (RAs), the active metabolites of vitamin A, and critical signaling molecules in animals. RAs exist as at least four different isomers: all-trans-RA (atRA), 9-cis-RA, 13-cis-RA, and 9,13-dicis-RA, where atRA is considered to be the biologically active isomer, although 9-cis-RA and 13-cis-RA also have activity. Catalyzes the hydroxylation of atRA primarily at C-4 and C-18, thereby contributing to the regulation of atRA homeostasis and signaling. Hydroxylation of atRA limits its biological activity and initiates a degradative process leading to its eventual elimination. Involved in the convertion of atRA to all-trans-4-oxo-RA. Can oxidize all-trans-13,14-dihydroretinoate (DRA) to metabolites which could include all-trans-4-oxo-DRA, all-trans-4-hydroxy-DRA, all-trans-5,8-epoxy-DRA, and all-trans-18-hydroxy-DRA. Shows preference for the following substrates: atRA &gt; 9-cis-RA &gt; 13-cis-RA. Plays a central role in germ cell development: acts by degrading RAs in the developing testis, preventing STRA8 expression, thereby leading to delay of meiosis. Required for the maintenance of the undifferentiated state of male germ cells during embryonic development in Sertoli cells, inducing arrest in G0 phase of the cell cycle and preventing meiotic entry. Plays a role in skeletal development, both at the level of patterning and in the ossification of bone and the establishment of some synovial joints. Essential for postnatal survival. Functionally, also has a significant activity in oxidation of tazarotenic acid and may therefore metabolize that xenobiotic in vivo. The sequence is that of Cytochrome P450 26B1 (Cyp26b1) from Mus musculus (Mouse).